The primary structure comprises 175 residues: NADH-ubiquinone oxidoreductase chain 6 (175 aa).

The next 5 membrane-spanning stretches (helical) occupy residues 1–21 (MMMY…VGVS), 25–45 (SPIY…GVIL), 47–67 (FGGS…MLVV), 88–108 (VVLG…IYAL), and 149–169 (YGVW…VIIM).

The protein belongs to the complex I subunit 6 family. Core subunit of respiratory chain NADH dehydrogenase (Complex I) which is composed of 45 different subunits.

The protein localises to the mitochondrion inner membrane. It catalyses the reaction a ubiquinone + NADH + 5 H(+)(in) = a ubiquinol + NAD(+) + 4 H(+)(out). Core subunit of the mitochondrial membrane respiratory chain NADH dehydrogenase (Complex I) which catalyzes electron transfer from NADH through the respiratory chain, using ubiquinone as an electron acceptor. Essential for the catalytic activity and assembly of complex I. The sequence is that of NADH-ubiquinone oxidoreductase chain 6 (MT-ND6) from Balaenoptera physalus (Fin whale).